We begin with the raw amino-acid sequence, 100 residues long: MAKLANPRDVIIAPVVSEKSYGLMEQNVYTFYVSTDSNKTQIKDAVEQIFGVKVASVNTVNRAGKRKRTRTGYGQRKSTKRAYVTLREGSDSIDVFGAGA.

Belongs to the universal ribosomal protein uL23 family. In terms of assembly, part of the 50S ribosomal subunit. Contacts protein L29, and trigger factor when it is bound to the ribosome.

Functionally, one of the early assembly proteins it binds 23S rRNA. One of the proteins that surrounds the polypeptide exit tunnel on the outside of the ribosome. Forms the main docking site for trigger factor binding to the ribosome. In Corynebacterium aurimucosum (strain ATCC 700975 / DSM 44827 / CIP 107346 / CN-1) (Corynebacterium nigricans), this protein is Large ribosomal subunit protein uL23.